Reading from the N-terminus, the 257-residue chain is Myosin-8 (257 aa).

Residues 1 to 257 are a coiled coil; sequence RAALQAEIEE…REVHTKISAE (257 aa). Phosphoserine is present on residues Ser33, Ser45, and Ser58.

In terms of assembly, muscle myosin is a hexameric protein that consists of 2 heavy chain subunits (MHC), 2 alkali light chain subunits (MLC) and 2 regulatory light chain subunits (MLC-2).

It is found in the cytoplasm. It localises to the myofibril. Its function is as follows. Muscle contraction. The polypeptide is Myosin-8 (Myh8) (Rattus norvegicus (Rat)).